The following is a 215-amino-acid chain: Penicillin-binding protein activator LpoB (215 aa).

The N-terminal stretch at 1–19 is a signal peptide; it reads MMKMCRYALITALAIFLAG. Cys20 is lipidated: N-palmitoyl cysteine. Residue Cys20 is the site of S-diacylglycerol cysteine attachment. The tract at residues 28 to 78 is disordered; it reads APVEEAKPQPQQPAQPQPTVPTVPAVPSVPAQPGPIEHQDQQSGQPAPRVR. Positions 37 to 48 are enriched in pro residues; it reads PQQPAQPQPTVP. Residues 49 to 58 show a composition bias toward low complexity; it reads TVPAVPSVPA.

The protein belongs to the LpoB family. As to quaternary structure, interacts with PBP1b.

It is found in the cell outer membrane. Its function is as follows. Regulator of peptidoglycan synthesis that is essential for the function of penicillin-binding protein 1B (PBP1b). The polypeptide is Penicillin-binding protein activator LpoB (Klebsiella pneumoniae subsp. pneumoniae (strain ATCC 700721 / MGH 78578)).